The chain runs to 344 residues: Melanocyte-stimulating hormone receptor (344 aa).

The Extracellular segment spans residues 1-37 (MPMQGAQRKLLGSLNSTPTATSNPGLAANHTGAPCLE). Asn-29 carries N-linked (GlcNAc...) asparagine glycosylation. A helical transmembrane segment spans residues 38–63 (VSIPDGLFLSLGLVSLVENVLVVAAI). The Cytoplasmic segment spans residues 64 to 72 (AKNRNLHSS). A helical transmembrane segment spans residues 73–93 (MYXFICCLALSDLLVSGSNML). The Extracellular portion of the chain corresponds to 94–118 (ETAIILLLEAGTLATRASVVQQLHN). The helical transmembrane segment at 119-140 (TIDVLTCSSMLCSLCFLGAIAV) threads the bilayer. Topologically, residues 141–163 (DRYISIFYALRYHSIMTLPRAQR) are cytoplasmic. Residues 164–183 (AIAAIWVASVLSSTLFITYY) form a helical membrane-spanning segment. The Extracellular segment spans residues 184-191 (DHAAVLLC). Residues 192-211 (LVVFFLAMLVLMAVLYVHML) traverse the membrane as a helical segment. Residues 212-240 (ARACQHAQGIIRLHNRQLPAHKGFGLRGA) are Cytoplasmic-facing. Residues 241–266 (ATLTILLGIFFLCWGPFFLHLTLVVF) form a helical membrane-spanning segment. Over 267–279 (CPQHLTCNCIFKN) the chain is Extracellular. The helical transmembrane segment at 280–300 (FKVFLTLIICNTIIDPLIYAF) threads the bilayer. Topologically, residues 301 to 344 (RSQELRRTLKEVLLCSSWPGCWAEGGGDSVWPGSCVTLRGPLPP) are cytoplasmic. The S-palmitoyl cysteine moiety is linked to residue Cys-315.

Belongs to the G-protein coupled receptor 1 family. In terms of assembly, interacts with MGRN1, but does not undergo MGRN1-mediated ubiquitination; this interaction competes with GNAS-binding and thus inhibits agonist-induced cAMP production. Interacts with OPN3; the interaction results in a decrease in MC1R-mediated cAMP signaling and ultimately a decrease in melanin production in melanocytes.

It localises to the cell membrane. Functionally, receptor for MSH (alpha, beta and gamma) and ACTH. The activity of this receptor is mediated by G proteins which activate adenylate cyclase. Mediates melanogenesis, the production of eumelanin (black/brown) and phaeomelanin (red/yellow), via regulation of cAMP signaling in melanocytes. The chain is Melanocyte-stimulating hormone receptor (MC1R) from Callithrix geoffroyi (Geoffroy's marmoset).